A 208-amino-acid chain; its full sequence is FMN-dependent NADH:quinone oxidoreductase (208 aa).

Residues Ser10, Ser16 to Ser18, and Met96 to Phe99 contribute to the FMN site.

Belongs to the azoreductase type 1 family. In terms of assembly, homodimer. Requires FMN as cofactor.

It carries out the reaction 2 a quinone + NADH + H(+) = 2 a 1,4-benzosemiquinone + NAD(+). It catalyses the reaction N,N-dimethyl-1,4-phenylenediamine + anthranilate + 2 NAD(+) = 2-(4-dimethylaminophenyl)diazenylbenzoate + 2 NADH + 2 H(+). Functionally, quinone reductase that provides resistance to thiol-specific stress caused by electrophilic quinones. In terms of biological role, also exhibits azoreductase activity. Catalyzes the reductive cleavage of the azo bond in aromatic azo compounds to the corresponding amines. The protein is FMN-dependent NADH:quinone oxidoreductase of Xanthobacter autotrophicus (strain ATCC BAA-1158 / Py2).